A 185-amino-acid polypeptide reads, in one-letter code: Ribosome-recycling factor (185 aa).

Belongs to the RRF family.

Its subcellular location is the cytoplasm. Functionally, responsible for the release of ribosomes from messenger RNA at the termination of protein biosynthesis. May increase the efficiency of translation by recycling ribosomes from one round of translation to another. In Pseudoalteromonas atlantica (strain T6c / ATCC BAA-1087), this protein is Ribosome-recycling factor.